We begin with the raw amino-acid sequence, 785 residues long: (+)-copalyl diphosphate synthase 3, chloroplastic (785 aa).

Lys-238 is a binding site for substrate. Residues Asp-371 and Asp-373 each contribute to the Mg(2+) site. The DXDD motif motif lies at 371–374 (DIDD). Substrate is bound at residue Lys-457.

This sequence belongs to the terpene synthase family. Mg(2+) serves as cofactor. As to expression, present in both leaves and flowers, with higher levels in leaves.

It localises to the plastid. The protein localises to the chloroplast. It carries out the reaction (2E,6E,10E)-geranylgeranyl diphosphate = (+)-copalyl diphosphate. The protein operates within secondary metabolite biosynthesis; terpenoid biosynthesis. Its function is as follows. Involved in the biosynthesis of labdane-type diterpenoid including marrubiin and other labdane-related furanoid diterpenoids with potential applications as anti-diabetics, analgesics or vasorelaxants. Terpene synthase that produces (+)-copalyl diphosphate ((+)-CPP) from geranylgeranyl diphosphate (GGPP). The protein is (+)-copalyl diphosphate synthase 3, chloroplastic of Marrubium vulgare (White horehound).